Here is a 50-residue protein sequence, read N- to C-terminus: Photosystem I reaction center subunit IX (50 aa).

The helical transmembrane segment at 7–27 threads the bilayer; sequence YLSTAPVLAILCCSFLAGLVI.

The protein belongs to the PsaJ family.

The protein localises to the plastid. Its subcellular location is the chloroplast thylakoid membrane. Functionally, may help in the organization of the PsaE and PsaF subunits. The protein is Photosystem I reaction center subunit IX of Pinus koraiensis (Korean pine).